We begin with the raw amino-acid sequence, 281 residues long: NAD-dependent protein deacetylase 3 (281 aa).

In terms of domain architecture, Deacetylase sirtuin-type spans Met1–Arg281. Residues Gly27–Arg47 and Gln105–Asp108 contribute to the NAD(+) site. Residue His123 is the Proton acceptor of the active site. Positions 131, 134, 182, and 185 each coordinate Zn(2+). Residues Gly223–Ser225, Asn249–Gly251, and Cys267 contribute to the NAD(+) site.

Belongs to the sirtuin family. Class II subfamily. It depends on Zn(2+) as a cofactor.

The protein localises to the cytoplasm. The enzyme catalyses N(6)-acetyl-L-lysyl-[protein] + NAD(+) + H2O = 2''-O-acetyl-ADP-D-ribose + nicotinamide + L-lysyl-[protein]. Functionally, NAD-dependent protein deacetylase which modulates the activities of several enzymes which are inactive in their acetylated form. The polypeptide is NAD-dependent protein deacetylase 3 (Pseudomonas syringae pv. tomato (strain ATCC BAA-871 / DC3000)).